Here is a 502-residue protein sequence, read N- to C-terminus: Smr domain-containing protein C1235.03 (502 aa).

The tract at residues 150-184 (LITSNIGHRSRQRKKKTKKATNSRKPLSKFQSNTE) is disordered. Basic residues predominate over residues 157–171 (HRSRQRKKKTKKATN). A Smr domain is found at 411-459 (SLDLHGATVREAKTIVRERVAAWWAKEADTSPNSIRPFVIVTGRGNHSI).

It localises to the nucleus. It is found in the nucleolus. This chain is Smr domain-containing protein C1235.03, found in Schizosaccharomyces pombe (strain 972 / ATCC 24843) (Fission yeast).